A 426-amino-acid chain; its full sequence is Dihydroorotase (426 aa).

The Zn(2+) site is built by H61 and H63. Residues 63-65 (HCR) and N95 each bind substrate. 4 residues coordinate Zn(2+): E146, H180, H229, and D297. Residue D297 is part of the active site. A substrate-binding site is contributed by H301.

This sequence belongs to the metallo-dependent hydrolases superfamily. DHOase family. Class I DHOase subfamily. It depends on Zn(2+) as a cofactor.

The enzyme catalyses (S)-dihydroorotate + H2O = N-carbamoyl-L-aspartate + H(+). The protein operates within pyrimidine metabolism; UMP biosynthesis via de novo pathway; (S)-dihydroorotate from bicarbonate: step 3/3. In terms of biological role, catalyzes the reversible cyclization of carbamoyl aspartate to dihydroorotate. This Methanopyrus kandleri (strain AV19 / DSM 6324 / JCM 9639 / NBRC 100938) protein is Dihydroorotase.